The chain runs to 25 residues: TKDPELKQCKKQQKKQQQYDDDDKK.

The tract at residues 1 to 25 (TKDPELKQCKKQQKKQQQYDDDDKK) is disordered.

Post-translationally, glycosylated. In terms of tissue distribution, expressed in seed.

The chain is Insulin mimetic protein from Cnidoscolus quercifolius.